The chain runs to 436 residues: Gamma-glutamyl phosphate reductase (436 aa).

The protein belongs to the gamma-glutamyl phosphate reductase family.

The protein localises to the cytoplasm. The enzyme catalyses L-glutamate 5-semialdehyde + phosphate + NADP(+) = L-glutamyl 5-phosphate + NADPH + H(+). Its pathway is amino-acid biosynthesis; L-proline biosynthesis; L-glutamate 5-semialdehyde from L-glutamate: step 2/2. Its function is as follows. Catalyzes the NADPH-dependent reduction of L-glutamate 5-phosphate into L-glutamate 5-semialdehyde and phosphate. The product spontaneously undergoes cyclization to form 1-pyrroline-5-carboxylate. This chain is Gamma-glutamyl phosphate reductase, found in Polaromonas sp. (strain JS666 / ATCC BAA-500).